A 522-amino-acid polypeptide reads, in one-letter code: MNHAKVNQHPGQATLPETAEGQVRTYEVKTYGCQMNVHDSERLSGLLEEAGYVAAPEDTTPDLVVFNTCAVRENADMRLYGTLGNLRSVKEKNPGMQIAVGGCLAQKDKDTVVKKAPWVDVVFGTHNIGSLPTLLQRAEHNAQAEVEIVDSLEQFPSVLSAKRESAYAGWVSVSVGCNNTCTFCIVPSLRGKEQDRRPGDILAEVQALVDQGVTEVTLLGQNVNAYGVNFVDPELERDRSAFSKLLRACGEIEGLERVRFTSPHPAEFTSDVIDAMAETPNICPQLHMPLQSGSDKVLKEMRRSYRSKKFLSILDEVRAKIPHASITTDIIVGFPGETEEDFQATLDVVKKARFTSAYTFQYSPRPGTPAAEYENQLPKEVVQERYERLMVVQEQVCEEENQKLIGTTVELLVQAGGGRKNDATKRMSGRARDGRLVHFAPEGDIDGEIRPGDFVTVTVTEAKPFFLIADSGVQTHRRTKAGDNSAVGQVPTTAPIGVGLGLPQIGAPKVAPATESACCSIN.

The MTTase N-terminal domain occupies 24–140 (RTYEVKTYGC…LPTLLQRAEH (117 aa)). [4Fe-4S] cluster contacts are provided by cysteine 33, cysteine 69, cysteine 103, cysteine 177, cysteine 181, and cysteine 184. The Radical SAM core domain occupies 163–399 (RESAYAGWVS…MVVQEQVCEE (237 aa)). The TRAM domain maps to 402 to 473 (QKLIGTTVEL…PFFLIADSGV (72 aa)).

It belongs to the methylthiotransferase family. MiaB subfamily. As to quaternary structure, monomer. The cofactor is [4Fe-4S] cluster.

The protein resides in the cytoplasm. The enzyme catalyses N(6)-dimethylallyladenosine(37) in tRNA + (sulfur carrier)-SH + AH2 + 2 S-adenosyl-L-methionine = 2-methylsulfanyl-N(6)-dimethylallyladenosine(37) in tRNA + (sulfur carrier)-H + 5'-deoxyadenosine + L-methionine + A + S-adenosyl-L-homocysteine + 2 H(+). Catalyzes the methylthiolation of N6-(dimethylallyl)adenosine (i(6)A), leading to the formation of 2-methylthio-N6-(dimethylallyl)adenosine (ms(2)i(6)A) at position 37 in tRNAs that read codons beginning with uridine. This chain is tRNA-2-methylthio-N(6)-dimethylallyladenosine synthase, found in Corynebacterium glutamicum (strain ATCC 13032 / DSM 20300 / JCM 1318 / BCRC 11384 / CCUG 27702 / LMG 3730 / NBRC 12168 / NCIMB 10025 / NRRL B-2784 / 534).